The following is a 281-amino-acid chain: Ermin (281 aa).

3 stretches are compositionally biased toward polar residues: residues 1–12, 21–31, and 135–147; these read MTDTPETLSGTE, NGQQPSSQTRQ, and AQQQ…DAST. 3 disordered regions span residues 1–80, 110–147, and 167–248; these read MTDT…KILN, REGH…DAST, and KCDE…GDIA. The span at 169–197 shows a compositional bias: acidic residues; that stretch reads DEEEEEEEEVWNEEINEEDVDECAEEEDE. Residues 198–223 are compositionally biased toward basic and acidic residues; it reads VRVIEFKRKHREGSPLKEESLAREDS. Phosphoserine is present on residues Ser-211, Ser-223, Ser-227, and Ser-230. Thr-234 is subject to Phosphothreonine. The tract at residues 262–281 is binds actin; the sequence is KIRKGNTKQRIDEFESMMHL.

As to quaternary structure, binds actin. Brain and spinal cord. Exclusively expressed by the oligodendrocytes. Appears at a late stage during myelination, and in the mature nerves, it is localized to the outer cytoplasmic lip of the myelin sheath and the paranodal loops.

Its subcellular location is the cytoplasm. It is found in the cytoskeleton. In terms of biological role, plays a role in cytoskeletal rearrangements during the late wrapping and/or compaction phases of myelinogenesis as well as in maintenance and stability of myelin sheath in the adult. May play an important role in late-stage oligodendroglia maturation, myelin/Ranvier node formation during CNS development, and in the maintenance and plasticity of related structures in the mature CNS. This Mus musculus (Mouse) protein is Ermin (Ermn).